Here is a 339-residue protein sequence, read N- to C-terminus: Glycerol-3-phosphate dehydrogenase [NAD(P)+] (339 aa).

Positions 15, 16, 36, and 110 each coordinate NADPH. Sn-glycerol 3-phosphate is bound by residues K110, G139, and T141. NADPH is bound at residue A143. Positions 195, 248, 258, 259, and 260 each coordinate sn-glycerol 3-phosphate. The active-site Proton acceptor is K195. R259 lines the NADPH pocket. V283 and E285 together coordinate NADPH.

Belongs to the NAD-dependent glycerol-3-phosphate dehydrogenase family.

It is found in the cytoplasm. It catalyses the reaction sn-glycerol 3-phosphate + NAD(+) = dihydroxyacetone phosphate + NADH + H(+). The catalysed reaction is sn-glycerol 3-phosphate + NADP(+) = dihydroxyacetone phosphate + NADPH + H(+). The protein operates within membrane lipid metabolism; glycerophospholipid metabolism. Functionally, catalyzes the reduction of the glycolytic intermediate dihydroxyacetone phosphate (DHAP) to sn-glycerol 3-phosphate (G3P), the key precursor for phospholipid synthesis. The sequence is that of Glycerol-3-phosphate dehydrogenase [NAD(P)+] from Shigella dysenteriae serotype 1 (strain Sd197).